A 386-amino-acid chain; its full sequence is Zinc finger CCCH domain-containing protein 39 (386 aa).

The segment at 1-90 (MDSSYSDSRP…SSSNPWMVPS (90 aa)) is disordered. A compositionally biased stretch (polar residues) spans 20–37 (WNQTQMIDSMANPMNNEQ). Low complexity predominate over residues 43–58 (LSESQSQSQPSQQLQP). The segment covering 72-85 (NPASSFPQPSSSNP) has biased composition (polar residues). Residues 104–131 (FYKTRMCAKFRAGTCRNGELCNFAHGIE) form a C3H1-type 1 zinc finger. Positions 136 to 166 (PPSNWQEIVGPPPAGQDRERERERERERERP) are disordered. A compositionally biased stretch (basic and acidic residues) spans 151–166 (QDRERERERERERERP). 2 C3H1-type zinc fingers span residues 183 to 211 (ILRMKLCRKFCFGEECPYGDRCNFIHEDL) and 269 to 297 (YWKTRLCMKFDITGQCPFGDKCHFAHGQA).

This chain is Zinc finger CCCH domain-containing protein 39, found in Arabidopsis thaliana (Mouse-ear cress).